A 221-amino-acid polypeptide reads, in one-letter code: MDSLATDPAFIDSDVYLRLGLIIEGKRLKKPPTVLSRLSSSLERSLLLNHDDKILLGSPDSVTVFDGRSPPEISIAHYLDRIFKYSCCSPSCFVIAHIYIDHFLHKTRALLKPLNVHRLIITTVMLAAKVFDDRYFNNAYYARVGGVTTRELNRLEMELLFTLDFKLQVDPQTFHTHCCQLEKQNRDGFQIEWPIKEACRANKETWQKRTPDSLCSQTTAR.

The protein belongs to the cyclin family. Cyclin U/P subfamily. As to quaternary structure, interacts with CDKA-1 and CDKB1-1. As to expression, expressed in roots, stems and flowers. Expressed in the shoot apex, leaf primordia and young leaves.

In Arabidopsis thaliana (Mouse-ear cress), this protein is Cyclin-U3-1 (CYCU3-1).